The chain runs to 178 residues: MSFSFLFLGNLPLAEGFGINTNIFETNIINLAAVVAIVISFVGKNLSALLEDRRKTIVNNLQEASQRAAEAQERLNIAKNQLEVAKKKATEIREEGVFRATQEINNCVAQHEERLSKLEEFKQETVQFYQQKAFKQAYVYIISRIMSRVKERLNKGLDATYHVVVNNFYVSRFTEYNP.

A helical transmembrane segment spans residues 23–43; it reads IFETNIINLAAVVAIVISFVG.

Belongs to the ATPase B chain family. In terms of assembly, F-type ATPases have 2 components, F(1) - the catalytic core - and F(0) - the membrane proton channel. F(1) has five subunits: alpha(3), beta(3), gamma(1), delta(1), epsilon(1). F(0) has four main subunits: a(1), b(1), b'(1) and c(10-14). The alpha and beta chains form an alternating ring which encloses part of the gamma chain. F(1) is attached to F(0) by a central stalk formed by the gamma and epsilon chains, while a peripheral stalk is formed by the delta, b and b' chains.

Its subcellular location is the plastid. The protein localises to the chloroplast thylakoid membrane. In terms of biological role, f(1)F(0) ATP synthase produces ATP from ADP in the presence of a proton or sodium gradient. F-type ATPases consist of two structural domains, F(1) containing the extramembraneous catalytic core and F(0) containing the membrane proton channel, linked together by a central stalk and a peripheral stalk. During catalysis, ATP synthesis in the catalytic domain of F(1) is coupled via a rotary mechanism of the central stalk subunits to proton translocation. Its function is as follows. Component of the F(0) channel, it forms part of the peripheral stalk, linking F(1) to F(0). The polypeptide is ATP synthase subunit b, chloroplastic (Tetradesmus obliquus (Green alga)).